The sequence spans 318 residues: Transcription factor FER-LIKE IRON DEFICIENCY-INDUCED TRANSCRIPTION FACTOR (318 aa).

The tract at residues 90-138 (FDGDSVRAGGEEDEEDYNDGDDSSATTTNNDGTRKTKTDRSRTLISERR) is disordered. The span at 100–111 (EEDEEDYNDGDD) shows a compositional bias: acidic residues. Residues 121-136 (GTRKTKTDRSRTLISE) are compositionally biased toward basic and acidic residues. One can recognise a bHLH domain in the interval 127-176 (TDRSRTLISERRRRGRMKDKLYALRSLVPNITKMDKASIVGDAVLYVQEL).

Homodimer. In terms of tissue distribution, expressed in roots and inflorescence, and to a lower extent, in leaves and stems. In roots, confined to the outer cell layers, specifically in the differentiation zone. Also detected in the endodermis and inner tissues of the central cylinder.

The protein localises to the nucleus. In terms of biological role, transcription factor. Essential protein involved in iron uptake responses. Regulates FRO2 at the level of mRNA accumulation and IRT1 at the level of protein accumulation. Confers enhanced iron mobilization responses at low iron supply. This Arabidopsis thaliana (Mouse-ear cress) protein is Transcription factor FER-LIKE IRON DEFICIENCY-INDUCED TRANSCRIPTION FACTOR (FIT).